The primary structure comprises 59 residues: Large ribosomal subunit protein uL30 (59 aa).

The protein belongs to the universal ribosomal protein uL30 family. In terms of assembly, part of the 50S ribosomal subunit.

This Alteromonas mediterranea (strain DSM 17117 / CIP 110805 / LMG 28347 / Deep ecotype) protein is Large ribosomal subunit protein uL30.